A 190-amino-acid chain; its full sequence is Holliday junction branch migration complex subunit RuvA (190 aa).

The tract at residues 1–63 is domain I; it reads MIRKINATIE…EWNTSLYIFK (63 aa). The segment at 64-138 is domain II; the sequence is DKIERDVFES…NSFSAYSTGA (75 aa). A flexible linker region spans residues 138-142; that stretch reads ADTQS. The tract at residues 143–190 is domain III; the sequence is YGNNNLKEAIEALETLGFQRYEIMKVIGQLDLEDLKTEEIIKECLTRL.

This sequence belongs to the RuvA family. In terms of assembly, homotetramer. Forms an RuvA(8)-RuvB(12)-Holliday junction (HJ) complex. HJ DNA is sandwiched between 2 RuvA tetramers; dsDNA enters through RuvA and exits via RuvB. An RuvB hexamer assembles on each DNA strand where it exits the tetramer. Each RuvB hexamer is contacted by two RuvA subunits (via domain III) on 2 adjacent RuvB subunits; this complex drives branch migration. In the full resolvosome a probable DNA-RuvA(4)-RuvB(12)-RuvC(2) complex forms which resolves the HJ.

The protein localises to the cytoplasm. Functionally, the RuvA-RuvB-RuvC complex processes Holliday junction (HJ) DNA during genetic recombination and DNA repair, while the RuvA-RuvB complex plays an important role in the rescue of blocked DNA replication forks via replication fork reversal (RFR). RuvA specifically binds to HJ cruciform DNA, conferring on it an open structure. The RuvB hexamer acts as an ATP-dependent pump, pulling dsDNA into and through the RuvAB complex. HJ branch migration allows RuvC to scan DNA until it finds its consensus sequence, where it cleaves and resolves the cruciform DNA. This chain is Holliday junction branch migration complex subunit RuvA, found in Petrotoga mobilis (strain DSM 10674 / SJ95).